The primary structure comprises 422 residues: MRLQIKDIKIIDPLQNRDLIGDIFVENGRIVSKFLGDADKVVDGRGKIAVPGLIDIHSHLREPGEERKETIYTGTRSAAKGGITTVFCMPNTKPVIDNAPTVEFVLLKAQKEGLVNVLPIGCATKGSHGVEISEIGVLKKAGIVAVSDDGLPIANSQIMRRTLEYTKMFKLPVISHGEDKELSKNGVMNEGKNSMILGLRGIPKQAEEVIISRDIMLAELTEGYLHIAHVSTAGSVELIRQAKKKSIKVTAETCPHYFTLTDDIVKGYNTNTKMNPPLRRQEDVDAIKQGLADGTIDCIATDHAPHMEEEKNREFDLAPFGIIGFETILSLILNELVDSGVLSLSKALSKMTSNPAKIFNLEGRGTLKEGNIADITIIDMKYSYEFKKENIVSKSKNSPFIGRKFKGGAVMTIVGGNIVWQV.

Zn(2+) is bound by residues H57 and H59. Substrate is bound by residues 59-61 (HLR) and N91. Zn(2+) is bound by residues D149, H176, and H229. A substrate-binding site is contributed by N275. D302 contributes to the Zn(2+) binding site. Residue D302 is part of the active site. Substrate contacts are provided by residues H306 and 320–321 (FG).

Belongs to the metallo-dependent hydrolases superfamily. DHOase family. Class I DHOase subfamily. It depends on Zn(2+) as a cofactor.

The enzyme catalyses (S)-dihydroorotate + H2O = N-carbamoyl-L-aspartate + H(+). It functions in the pathway pyrimidine metabolism; UMP biosynthesis via de novo pathway; (S)-dihydroorotate from bicarbonate: step 3/3. In terms of biological role, catalyzes the reversible cyclization of carbamoyl aspartate to dihydroorotate. The polypeptide is Dihydroorotase (Endomicrobium trichonymphae).